Here is a 72-residue protein sequence, read N- to C-terminus: ATP synthase subunit c (72 aa).

Helical transmembrane passes span 1–21 (MSLGVIAAAIAIGLSALGAGI) and 49–69 (FIGVALVEALPIIGVVIAFIV).

It belongs to the ATPase C chain family. F-type ATPases have 2 components, F(1) - the catalytic core - and F(0) - the membrane proton channel. F(1) has five subunits: alpha(3), beta(3), gamma(1), delta(1), epsilon(1). F(0) has three main subunits: a(1), b(2) and c(10-14). The alpha and beta chains form an alternating ring which encloses part of the gamma chain. F(1) is attached to F(0) by a central stalk formed by the gamma and epsilon chains, while a peripheral stalk is formed by the delta and b chains.

Its subcellular location is the cell membrane. Its function is as follows. F(1)F(0) ATP synthase produces ATP from ADP in the presence of a proton or sodium gradient. F-type ATPases consist of two structural domains, F(1) containing the extramembraneous catalytic core and F(0) containing the membrane proton channel, linked together by a central stalk and a peripheral stalk. During catalysis, ATP synthesis in the catalytic domain of F(1) is coupled via a rotary mechanism of the central stalk subunits to proton translocation. Functionally, key component of the F(0) channel; it plays a direct role in translocation across the membrane. A homomeric c-ring of between 10-14 subunits forms the central stalk rotor element with the F(1) delta and epsilon subunits. The polypeptide is ATP synthase subunit c (Bacillus anthracis (strain A0248)).